The primary structure comprises 132 residues: SH2 domain-containing protein 1B (132 aa).

An SH2 domain is found at 5–101 (YYHGRLTKQD…GMVVHLLKPI (97 aa)). Tyr-127 carries the phosphotyrosine modification.

Binds to the phosphorylated receptors CD84, SLAMF1, LY9 and CD244. Does not bind to non-phosphorylated SLAMF1. Interacts with SLAMF7 (via ITSM phosphorylated on 'Tyr-304'). Interacts with Src kinases HCK, LYN, FYN, FGR and LCK (via kinase domains). Interacts (phosphorylated at Tyr-127) with PLCG1.

In terms of biological role, cytoplasmic adapter regulating receptors of the signaling lymphocytic activation molecule (SLAM) family such as CD84, SLAMF1, LY9 and CD244. In SLAM signaling seems to cooperate with SH2D1A/SAP. Plays a role in regulation of effector functions of natural killer (NK) cells by controlling signal transduction through CD244/2B4 without effecting its tyrosine phosphorylation; downstream signaling involves PLCG1 and ERK activation. Activation of SLAMF7-mediated NK cell function does not effect receptor tyrosine phosphorylation but distal signaling. In the context of NK cell-mediated cytotoxicity does not enhance conjugate formation with target cells but stimulates polarization of the microtubule-organizing center and cytotoxic granules toward the NK cell synapse. Negatively regulates CD40-induced cytokine production in dendritic cells downstream of SLAM family receptors probably by inducing activation of the PI3K pathway to inhibit p38 MAPK and JNK activation. In Homo sapiens (Human), this protein is SH2 domain-containing protein 1B (SH2D1B).